Consider the following 179-residue polypeptide: Large ribosomal subunit protein uL5 (179 aa).

As to quaternary structure, contacts the P site tRNA. Forms a bridge to the 30S subunit in the 70S ribosome. Part of the 50S ribosomal subunit. Part of the 5S rRNA/L5/L18 subcomplex; in this organism only 2 proteins, L5 and L18 have been shown to be part of the 5S rRNA subcomplex, unlike E.coli and T.thermophilus where L25 (TL5) is also found. Has been shown to bind 5S rRNA.

Its function is as follows. This is one of the proteins that bind and probably mediate the attachment of the 5S RNA into the large ribosomal subunit, where it forms part of the central protuberance. In the 70S ribosome it contacts protein S13 of the 30S subunit (bridge B1b), connecting the 2 subunits; this bridge is implicated in subunit movement. Contacts the P site tRNA; the 5S rRNA and some of its associated proteins might help stabilize positioning of ribosome-bound tRNAs. The sequence is that of Large ribosomal subunit protein uL5 (rplE) from Geobacillus stearothermophilus (Bacillus stearothermophilus).